The primary structure comprises 253 residues: MSKNIKTPTNQKVLTNVAVVRMKKTGKRFEIACYKNKVVNWRNKSEKDIDEVLQTHTVFSNVSKGQLSKKEELIAAFGIEDQLEICKIILDKGDLQVSEKERQAASDQSLKEVSQLIASMVVNPETKRPVPPSVIDKALQEMHFSLKPNRSSKQQALDAIPKLRETLKIERAKMKIRVAIPTKEAKSVHTKLKTLFSDVEVDDWQDGSLEMVGLIEPGSFRALDDLVRNETKGHGRLEILSLKDVVEGELQIS.

The protein belongs to the SDO1/SBDS family. In terms of assembly, associates with the 60S ribosomal subunit.

The protein resides in the cytoplasm. It localises to the nucleus. It is found in the nucleolus. The protein localises to the nucleoplasm. Its subcellular location is the cytoskeleton. The protein resides in the spindle. Its function is as follows. Required for the assembly of mature ribosomes and ribosome biogenesis. Together with K10C3.5b/EFL1, triggers the GTP-dependent release of ribosome maturation factors from 60S pre-ribosomes in the cytoplasm, thereby activating ribosomes for translation competence by allowing 80S ribosome assembly. Required for normal levels of protein synthesis. May play a role in cellular stress resistance. May play a role in cellular response to DNA damage. May play a role in cell proliferation. The polypeptide is Ribosome maturation protein SBDS (sbds-1) (Caenorhabditis elegans).